Consider the following 159-residue polypeptide: Ribosomal RNA large subunit methyltransferase H (159 aa).

S-adenosyl-L-methionine-binding positions include leucine 76, glycine 108, and 127–132; that span reads FSKMTL.

This sequence belongs to the RNA methyltransferase RlmH family. In terms of assembly, homodimer.

The protein localises to the cytoplasm. It catalyses the reaction pseudouridine(1915) in 23S rRNA + S-adenosyl-L-methionine = N(3)-methylpseudouridine(1915) in 23S rRNA + S-adenosyl-L-homocysteine + H(+). Functionally, specifically methylates the pseudouridine at position 1915 (m3Psi1915) in 23S rRNA. The sequence is that of Ribosomal RNA large subunit methyltransferase H from Bacillus cytotoxicus (strain DSM 22905 / CIP 110041 / 391-98 / NVH 391-98).